The chain runs to 1080 residues: Myocardin-related transcription factor B (1080 aa).

Residues 40 to 65 (EVLQLRLQQRRTREQLVDQGIMPPLK) form an RPEL 1 repeat. Phosphoserine is present on Ser66. RPEL repeat units follow at residues 84–109 (NFLK…EETF) and 128–153 (DDLN…PVDS). Disordered regions lie at residues 170 to 222 (THGE…AQFT), 234 to 311 (TPLT…EPQM), 352 to 384 (PIKT…SSLD), and 477 to 501 (PHVE…LSTD). 2 stretches are compositionally biased toward polar residues: residues 188–200 (QPAS…SAAS) and 240–259 (QPPT…SSAK). Residues 272–287 (NPNDKHRSKKCKDPKP) show a composition bias toward basic and acidic residues. Low complexity predominate over residues 358–370 (NSSSGSNSGSSSS). One can recognise an SAP domain in the interval 383-417 (LDDLKVSELKTELKLRGLPVSGTKPDLIERLKPYQ). Phosphoserine is present on residues Ser531, Ser535, and Ser537. A coiled-coil region spans residues 539–594 (SSSTLSTLELDAAEKDRKLQEKEKQIEELKRKLEQEQKLVEVLKMQLEVEKRGQQR). Positions 557–585 (LQEKEKQIEELKRKLEQEQKLVEVLKMQL) are required for interaction with itself and with MRTFA. Disordered regions lie at residues 588–646 (EKRG…SVGQ) and 794–846 (LQYQ…PQQF). The span at 595–606 (PPDPQPSDPPHP) shows a compositional bias: pro residues. A Glycyl lysine isopeptide (Lys-Gly) (interchain with G-Cter in SUMO1) cross-link involves residue Lys622. The segment covering 794 to 821 (LQYQRQPGPTNQQPFVSKTSNPALQSRT) has biased composition (polar residues). Ser913 carries the post-translational modification Phosphoserine. The interval 969 to 988 (GTLPSATDTGPLQNSSEDRE) is disordered. Over residues 972-983 (PSATDTGPLQNS) the composition is skewed to polar residues.

In terms of assembly, interacts with MRTFA and SRF. In terms of processing, O-glycosylated. As to expression, widely expressed. High expression in heart, brain and testis. Lower expression in lung, liver and kidney.

It is found in the nucleus. Acts as a transcriptional coactivator of serum response factor (SRF). Required for skeletal myogenic differentiation. The polypeptide is Myocardin-related transcription factor B (Mrtfb) (Mus musculus (Mouse)).